A 512-amino-acid polypeptide reads, in one-letter code: Probable capsid protein 4 (512 aa).

Belongs to the NCLDV major capsid protein family.

It is found in the virion. The polypeptide is Probable capsid protein 4 (Acanthamoeba polyphaga mimivirus (APMV)).